A 167-amino-acid polypeptide reads, in one-letter code: Endothelin-3 (167 aa).

Positions 1-19 (MELGLWLLLGLTVTSAAAA) are cleaved as a signal peptide. Positions 20–50 (LPAQPGNAGQERGPGRSGDQEEKRVPAHHRP) are excised as a propeptide. Positions 22-45 (AQPGNAGQERGPGRSGDQEEKRVP) are disordered. 2 cysteine pairs are disulfide-bonded: Cys-53–Cys-67 and Cys-55–Cys-63. Positions 74–167 (INTPEQTVPY…KSRTDKVHQP (94 aa)) are excised as a propeptide. The segment at 85 to 112 (LSNHRGSLRGKRSSGPVPESSQSSPQTR) is disordered. The segment covering 97-109 (SSGPVPESSQSSP) has biased composition (low complexity). Positions 115-135 (CACSGVDDKACAYFCAHVTSY) are endothelin-like. The segment covering 140-149 (EKAAAEEKQE) has biased composition (basic and acidic residues). Residues 140 to 167 (EKAAAEEKQETGGPRQRLKSRTDKVHQP) form a disordered region.

Belongs to the endothelin/sarafotoxin family.

It is found in the secreted. In terms of biological role, endothelins are endothelium-derived vasoconstrictor peptides. This Rattus norvegicus (Rat) protein is Endothelin-3 (Edn3).